Here is a 132-residue protein sequence, read N- to C-terminus: Small ribosomal subunit protein uS8 (132 aa).

The protein belongs to the universal ribosomal protein uS8 family. Part of the 30S ribosomal subunit. Contacts proteins S5 and S12.

Functionally, one of the primary rRNA binding proteins, it binds directly to 16S rRNA central domain where it helps coordinate assembly of the platform of the 30S subunit. The sequence is that of Small ribosomal subunit protein uS8 from Psychrobacter sp. (strain PRwf-1).